A 424-amino-acid chain; its full sequence is Serine hydroxymethyltransferase 2 (424 aa).

Residues L125 and 129–131 (GHL) each bind (6S)-5,6,7,8-tetrahydrofolate. K234 is modified (N6-(pyridoxal phosphate)lysine). E250 is a binding site for (6S)-5,6,7,8-tetrahydrofolate.

It belongs to the SHMT family. As to quaternary structure, homodimer. Requires pyridoxal 5'-phosphate as cofactor.

The protein resides in the cytoplasm. It carries out the reaction (6R)-5,10-methylene-5,6,7,8-tetrahydrofolate + glycine + H2O = (6S)-5,6,7,8-tetrahydrofolate + L-serine. It functions in the pathway one-carbon metabolism; tetrahydrofolate interconversion. It participates in amino-acid biosynthesis; glycine biosynthesis; glycine from L-serine: step 1/1. In terms of biological role, catalyzes the reversible interconversion of serine and glycine with tetrahydrofolate (THF) serving as the one-carbon carrier. This reaction serves as the major source of one-carbon groups required for the biosynthesis of purines, thymidylate, methionine, and other important biomolecules. Also exhibits THF-independent aldolase activity toward beta-hydroxyamino acids, producing glycine and aldehydes, via a retro-aldol mechanism. This Ralstonia nicotianae (strain ATCC BAA-1114 / GMI1000) (Ralstonia solanacearum) protein is Serine hydroxymethyltransferase 2.